A 59-amino-acid polypeptide reads, in one-letter code: Dimethylamine corrinoid protein (59 aa).

Residues Thr-1–Ala-59 enclose the B12-binding domain.

It belongs to the methylamine corrinoid protein family.

It participates in one-carbon metabolism; methanogenesis from dimethylamine. Acts as a methyl group carrier between MtbB and MtbA. The protein is Dimethylamine corrinoid protein (mtbC) of Methanosarcina thermophila.